Here is a 506-residue protein sequence, read N- to C-terminus: MAGGGLALDVSSAGNIDAKITAAVVMSCIVAASCGLIFGYDIGISGGVTTMKPFLEKFFPSVLKKASEAKTNVYCVYDSQLLTAFTSSLYVAGLVASLVASRLTAAYGRRTTMILGGFTFLFGALINGLAANIAMLISGRILLGFGVGFTNQAAPVYLSEVAPPRWRGAFNIGFSCFISMGVVAANLINYGTDSHRNGWRISLGLAAVPAAIMTVGCLFISDTPSSLLARGKHDEAHTSLLKLRGVENIADVETELAELVRSSQLAIEARAELFMKTILQRRYRPHLVVAVVIPCFQQLTGITVNAFYAPVLFRSVGFGSGPALIATFILGFVNLGSLLLSTMVIDRFGRRFLFIAGGILMLLCQIAVAVLLAVTVGATGDGEMKKGYAVTVVVLLCIYAAGFGWSWGPLSWLVPSEIFPLKIRPAGQSLSVAVNFAATFALSQTFLATLCDFKYGAFLFYGGWIFTMTIFVIMFLPETKGIPVDSMYQVWEKHWYWQRFTKPTST.

The Cytoplasmic portion of the chain corresponds to 1–19 (MAGGGLALDVSSAGNIDAK). 12 consecutive transmembrane segments (helical) span residues 20–40 (ITAAVVMSCIVAASCGLIFGY), 81–101 (LLTAFTSSLYVAGLVASLVAS), 117–137 (GFTFLFGALINGLAANIAMLI), 141–161 (ILLGFGVGFTNQAAPVYLSEV), 168–188 (GAFNIGFSCFISMGVVAANLI), 201–221 (ISLGLAAVPAAIMTVGCLFIS), 287–307 (LVVAVVIPCFQQLTGITVNAF), 325–345 (IATFILGFVNLGSLLLSTMVI), 352–372 (FLFIAGGILMLLCQIAVAVLL), 390–410 (VTVVVLLCIYAAGFGWSWGPL), 430–450 (LSVAVNFAATFALSQTFLATL), and 456–476 (GAFLFYGGWIFTMTIFVIMFL). At 477 to 506 (PETKGIPVDSMYQVWEKHWYWQRFTKPTST) the chain is on the cytoplasmic side.

Belongs to the major facilitator superfamily. Sugar transporter (TC 2.A.1.1) family.

The protein resides in the membrane. In terms of biological role, mediates an active uptake of hexoses, probably by sugar/hydrogen symport. This chain is Sugar transport protein 5 (STP5), found in Arabidopsis thaliana (Mouse-ear cress).